The primary structure comprises 336 residues: D-alanine--D-alanine ligase (336 aa).

Residues 124–330 enclose the ATP-grasp domain; sequence KMWFSALGVP…FTEYLIDVIG (207 aa). 154–209 serves as a coordination point for ATP; that stretch reads AFDNWGSVFVKAASQGSSVGCYKVDVKANIANVLKDAFSYAPYVVVEQTIHARELE. The Mg(2+) site is built by aspartate 284, glutamate 297, and asparagine 299.

This sequence belongs to the D-alanine--D-alanine ligase family. Mg(2+) is required as a cofactor. The cofactor is Mn(2+).

The protein resides in the cytoplasm. It carries out the reaction 2 D-alanine + ATP = D-alanyl-D-alanine + ADP + phosphate + H(+). It functions in the pathway cell wall biogenesis; peptidoglycan biosynthesis. Its function is as follows. Cell wall formation. The chain is D-alanine--D-alanine ligase from Shewanella frigidimarina (strain NCIMB 400).